The chain runs to 296 residues: Putative F-box protein At1g67623 (296 aa).

The F-box domain occupies 21-70; the sequence is SLCLDSLPEDLLVEISSCTGASSLSAVRNLRLVSKSFRRICDEKYVFYRL.

This is Putative F-box protein At1g67623 from Arabidopsis thaliana (Mouse-ear cress).